The sequence spans 547 residues: Carboxypeptidase N subunit 2 (547 aa).

The N-terminal stretch at 1-21 (MFPGAWLCWVSLLLLARLTQP) is a signal peptide. One can recognise an LRRNT domain in the interval 22 to 49 (CPVGCDCFGREVFCSDEQLADIPPDIPP). Residues N74, N111, and N119 are each glycosylated (N-linked (GlcNAc...) asparagine). LRR repeat units lie at residues 98–119 (RLQD…IFSN), 122–143 (SLEK…LFCH), 146–167 (ILES…LFQS), 170–191 (DLRT…AFQS), 194–215 (GLQM…ALGS), 218–239 (SLQE…LFSQ), 242–263 (SLEM…LFSS), 266–287 (NLTF…LFAH), 290–311 (GLLH…AFTN), 314–335 (RLVS…VFRN), 338–359 (QLVK…LFHN), and 362–383 (RLQL…IFDT). N-linked (GlcNAc...) asparagine glycosylation is found at N266 and N311. N-linked (GlcNAc...) asparagine glycans are attached at residues N348, N359, and N367. The LRRCT domain maps to 395 to 447 (NPWQCDCHLSYLTSWLRLYNNQISNTHTFCAGPAYLKGQLVPNLKQEQLICPV). An N-linked (GlcNAc...) asparagine glycan is attached at N520.

Tetramer of two catalytic chains and two glycosylated inactive chains.

The protein localises to the secreted. The 83 kDa subunit binds and stabilizes the catalytic subunit at 37 degrees Celsius and keeps it in circulation. Under some circumstances it may be an allosteric modifier of the catalytic subunit. This Mus musculus (Mouse) protein is Carboxypeptidase N subunit 2 (Cpn2).